Consider the following 385-residue polypeptide: Probable caffeine synthase MTL1 (385 aa).

7 residues coordinate S-adenosyl-L-homocysteine: Tyr18, Cys62, Asn67, Asp101, Leu102, Ser140, and Phe141. Residues Tyr158, Gln161, and Phe162 each coordinate caffeine. Asn179 is a Mg(2+) binding site. Thr238 lines the caffeine pocket. Mg(2+) is bound by residues Asp261, Phe263, and Asn264. Residue Tyr369 coordinates caffeine.

The protein belongs to the methyltransferase superfamily. Type-7 methyltransferase family. The cofactor is Mg(2+).

It participates in alkaloid biosynthesis. Functionally, may be involved in the biosynthesis of caffeine. The sequence is that of Probable caffeine synthase MTL1 from Coffea canephora (Robusta coffee).